Consider the following 152-residue polypeptide: 6,7-dimethyl-8-ribityllumazine synthase (152 aa).

Residues phenylalanine 21, alanine 55–glutamate 57, and cysteine 79–isoleucine 81 contribute to the 5-amino-6-(D-ribitylamino)uracil site. Alanine 84–threonine 85 contacts (2S)-2-hydroxy-3-oxobutyl phosphate. Histidine 87 functions as the Proton donor in the catalytic mechanism. Phenylalanine 112 serves as a coordination point for 5-amino-6-(D-ribitylamino)uracil. Arginine 126 provides a ligand contact to (2S)-2-hydroxy-3-oxobutyl phosphate.

The protein belongs to the DMRL synthase family. As to quaternary structure, forms an icosahedral capsid composed of 60 subunits, arranged as a dodecamer of pentamers.

The enzyme catalyses (2S)-2-hydroxy-3-oxobutyl phosphate + 5-amino-6-(D-ribitylamino)uracil = 6,7-dimethyl-8-(1-D-ribityl)lumazine + phosphate + 2 H2O + H(+). Its pathway is cofactor biosynthesis; riboflavin biosynthesis; riboflavin from 2-hydroxy-3-oxobutyl phosphate and 5-amino-6-(D-ribitylamino)uracil: step 1/2. Its function is as follows. Catalyzes the formation of 6,7-dimethyl-8-ribityllumazine by condensation of 5-amino-6-(D-ribitylamino)uracil with 3,4-dihydroxy-2-butanone 4-phosphate. This is the penultimate step in the biosynthesis of riboflavin. This chain is 6,7-dimethyl-8-ribityllumazine synthase, found in Staphylococcus carnosus (strain TM300).